Consider the following 79-residue polypeptide: Reactive oxygen species modulator 1 (79 aa).

The helical transmembrane segment at 22-44 (GFVMGCAVGMAAGALFGTFSCLR) threads the bilayer. A sufficient for antibacterial activity region spans residues 42–60 (CLRIGMRGRELMGGIGKTM).

This sequence belongs to the MGR2 family.

Its subcellular location is the mitochondrion inner membrane. Its function is as follows. Has antibacterial activity against a variety of bacteria including S.aureus, P.aeruginosa and M.tuberculosis. Acts by inducing bacterial membrane breakage. Induces production of reactive oxygen species (ROS) which are necessary for cell proliferation. May play a role in inducing oxidative DNA damage and replicative senescence. May play a role in the coordination of mitochondrial morphology and cell proliferation. This Bos taurus (Bovine) protein is Reactive oxygen species modulator 1 (ROMO1).